Consider the following 390-residue polypeptide: 5-hydroxytryptamine receptor 1B (390 aa).

The interval 1 to 21 is disordered; it reads MEETGAQCAPPPPAGSQTGVS. Topologically, residues 1–46 are extracellular; the sequence is MEETGAQCAPPPPAGSQTGVSQVNLSAAPSHNCSTEGYVYQDSVAL. N-linked (GlcNAc...) asparagine glycans are attached at residues Asn-24 and Asn-32. A helical membrane pass occupies residues 47 to 72; that stretch reads PWKVLLVVLLALITLATTLSNAFVIA. Over 73–86 the chain is Cytoplasmic; the sequence is TVYRTRKLHTPANY. The helical transmembrane segment at 87–111 threads the bilayer; it reads LIASLAVTDLLVSILVMPISTMYVV. Residues 112–119 are Extracellular-facing; that stretch reads TGRWTLGQ. The helical transmembrane segment at 120–145 threads the bilayer; that stretch reads VVCDFWLSSDITCCTASILHLCVIAL. Cysteines 122 and 199 form a disulfide. Residues Asp-129 and Thr-134 each coordinate ergotamine. The short motif at 146–148 is the DRY motif; important for ligand-induced conformation changes and signaling element; the sequence is DRY. Residues 146-165 lie on the Cytoplasmic side of the membrane; it reads DRYWAITDAVEYSAKRTPKR. A helical membrane pass occupies residues 166–184; sequence AAVMIALVWVFSISISLPP. The Extracellular portion of the chain corresponds to 185–205; sequence FFWRQAKAEEEVLDCLVNTDH. Position 201 (Val-201) interacts with ergotamine. The helical transmembrane segment at 206-229 threads the bilayer; the sequence is ILYTVYSTVGAFYFPTLLLIALYS. Residues 230–315 are Cytoplasmic-facing; that stretch reads RIYVEARSRI…AARERKATKT (86 aa). Positions 251 to 282 are disordered; the sequence is LTRAQLMTDSPGSTSSVTSINSRAPDVPSESG. Residues 255–272 show a composition bias toward polar residues; that stretch reads QLMTDSPGSTSSVTSINS. A helical transmembrane segment spans residues 316–337; that stretch reads LGIILGAFIVCWLPFFIISLVM. The Extracellular segment spans residues 338 to 347; the sequence is PICKDACWFH. A helical membrane pass occupies residues 348-370; sequence LAIFDFFTWLGYLNSLINPIIYT. The NPxxY motif; important for ligand-induced conformation changes and signaling motif lies at 365–369; it reads NPIIY. At 371 to 390 the chain is on the cytoplasmic side; it reads MSNEDFKQAFHKLIRFKCAS. Cys-388 carries the S-palmitoyl cysteine lipid modification.

It belongs to the G-protein coupled receptor 1 family. As to quaternary structure, homodimer. Heterodimer with HTR1D. In terms of processing, phosphorylated. Desensitization of the receptor may be mediated by its phosphorylation. Palmitoylated.

Its subcellular location is the cell membrane. Functionally, G-protein coupled receptor for 5-hydroxytryptamine (serotonin). Also functions as a receptor for ergot alkaloid derivatives, various anxiolytic and antidepressant drugs and other psychoactive substances, such as lysergic acid diethylamide (LSD). Ligand binding causes a conformation change that triggers signaling via guanine nucleotide-binding proteins (G proteins) and modulates the activity of downstream effectors, such as adenylate cyclase. HTR1B is coupled to G(i)/G(o) G alpha proteins and mediates inhibitory neurotransmission by inhibiting adenylate cyclase activity. Arrestin family members inhibit signaling via G proteins and mediate activation of alternative signaling pathways. Regulates the release of 5-hydroxytryptamine, dopamine and acetylcholine in the brain, and thereby affects neural activity, nociceptive processing, pain perception, mood and behavior. Besides, plays a role in vasoconstriction of cerebral arteries. The chain is 5-hydroxytryptamine receptor 1B (HTR1B) from Equus caballus (Horse).